Here is a 1088-residue protein sequence, read N- to C-terminus: MGKYNLILSEYLSFIYNSQSAVQIPIYYSSNSELENRCIEFHSKCLENSKNGLSLKKLFAEYSDVIENATLLSILSYSYDKYNAVERKLVKYAKSKPLEADLTVNELDYENNKITSELFPTAEEYTDSLMDPAILTSLSSNLNAVMFWLEKHENDVAEKLKIYKRRLDLFTIVASTVNKYGVPRHNAKYRYEYEVMKDKPYYLVTWANSSIEMLMSVFSHEDYLIARELIVLSYSNRSTLAKLVSSPMSILVALVDINGTFITNEELELEFSNKYVRAIVPDQTFDELKQMLDNMRKAGLTDIPKMIQDWLVDCSIEKFPLMAKIYSWSFHVGFRKQKMLDAALDQLKTEYTEDVDDEMYREYTMLIRDEVVKMLEEPVKHDDHLLQDSELAGLLSMSSASNGESRQLKFGRKTIFSTKKNMHVMDDMANGRYTPGIIPPVNVNKPIPLGRRDVPGRRTRIIFILPYEYFIAQHAVVEKMLIYAKHTREYAEFYSQSNQLLSYGDVTRFLSNNSMVLYTDVSQWDSSQHNTQPFRKGIIMGLDMLANMTNDARVIQTLNLYKQTQINLMDSYVQIPDGNVIKKIQYGAVASGEKQTKAANSIANLALIKTVLSRISNKYSFATKIIRVDGDDNYAVLQFNTEVTKQMVQDVSNDVRETYARMNAKVKALVSTVGIEIAKRYIAGGKIFFRAGINLLNNEKRGQSTQWDQAAVLYSNYIVNRLRGFETDREFILTKIMQMTSVAITGSLRLFPSERVLTTNSTFKVFDSEDFIIEYGTTDDEVYIQRAFMSLSSQKSGIADEIAASSTFKNYVSRLSEQLLFSKNNIVSRGIALTEKAKLNSYAPISLEKRRAQISALLTMLQKPVTFKSSKITINDILRDIKPFFTVSEAHLSIQYQKFMPTLPDNVQYIIQCIGSRTYQIEDDGSKSAISRLISKYSVYRPSIEELYKVISLHENEIQLYLISLGIPKIDADTYVGSKIYSQDKYRILESYVYNLLSINYGCYQLFDFNSPDLEKLIRIPFKGKIPAVTFILHLYAKLEVINHAIKNGSWISLFCNYPKSEMIKLWKKMWNITSLRSPYTNANFFQD.

Residues 501–687 (LSYGDVTRFL…AKRYIAGGKI (187 aa)) enclose the RdRp catalytic domain.

The protein belongs to the reoviridae RNA-directed RNA polymerase family. As to quaternary structure, interacts with VP3 (Potential). Interacts with VP2; this interaction activates VP1. Interacts with NSP5; this interaction is probably necessary for the formation of functional virus factories. Interacts with NSP2; this interaction is weak. The cofactor is Mg(2+).

The protein localises to the virion. The enzyme catalyses RNA(n) + a ribonucleoside 5'-triphosphate = RNA(n+1) + diphosphate. Functionally, RNA-directed RNA polymerase that is involved in both transcription and genome replication. Together with VP3 capping enzyme, forms an enzyme complex positioned near the channels situated at each of the five-fold vertices of the core. Following infection, the outermost layer of the virus is lost, leaving a double-layered particle (DLP) made up of the core and VP6 shell. VP1 then catalyzes the transcription of fully conservative plus-strand genomic RNAs that are extruded through the DLP's channels into the cytoplasm where they function as mRNAs for translation of viral proteins. One copy of each of the viral (+)RNAs is also recruited during core assembly, together with newly synthesized polymerase complexes and VP2. The polymerase of these novo-formed particles catalyzes the synthesis of complementary minus-strands leading to dsRNA formation. To do so, the polymerase specifically recognizes and binds 4 bases 5'-UGUG-3' in the conserved 3'-sequence of plus-strand RNA templates. VP2 presumably activates the autoinhibited VP1-RNA complex to coordinate packaging and genome replication. Once dsRNA synthesis is complete, the polymerase switches to the transcriptional mode, thus providing secondary transcription. This Rotavirus A (strain RVA/Cow/United States/NCDV-Lincoln/1969/G6P6[1]) (RV-A) protein is RNA-directed RNA polymerase.